We begin with the raw amino-acid sequence, 351 residues long: Alanine racemase (351 aa).

The Proton acceptor; specific for D-alanine role is filled by lysine 35. Position 35 is an N6-(pyridoxal phosphate)lysine (lysine 35). Residue arginine 127 participates in substrate binding. Residue tyrosine 247 is the Proton acceptor; specific for L-alanine of the active site. Methionine 295 is a substrate binding site.

The protein belongs to the alanine racemase family. It depends on pyridoxal 5'-phosphate as a cofactor.

The enzyme catalyses L-alanine = D-alanine. It functions in the pathway amino-acid biosynthesis; D-alanine biosynthesis; D-alanine from L-alanine: step 1/1. Its function is as follows. Catalyzes the interconversion of L-alanine and D-alanine. May also act on other amino acids. The polypeptide is Alanine racemase (alr) (Vesicomyosocius okutanii subsp. Calyptogena okutanii (strain HA)).